We begin with the raw amino-acid sequence, 209 residues long: Redox-sensing transcriptional repressor Rex (209 aa).

A DNA-binding region (H-T-H motif) is located at residues 16 to 55 (LYYRFIQNLSLSGKQRVSSAELSEAVKVDSATIRRDFSYF). Position 90 to 95 (90 to 95 (GVGNLG)) interacts with NAD(+).

The protein belongs to the transcriptional regulatory Rex family. As to quaternary structure, homodimer.

It is found in the cytoplasm. In terms of biological role, modulates transcription in response to changes in cellular NADH/NAD(+) redox state. The sequence is that of Redox-sensing transcriptional repressor Rex from Bacillus thuringiensis (strain Al Hakam).